The sequence spans 114 residues: UPF0757 protein YmgG (114 aa).

The protein belongs to the UPF0757 family.

The chain is UPF0757 protein YmgG from Escherichia fergusonii (strain ATCC 35469 / DSM 13698 / CCUG 18766 / IAM 14443 / JCM 21226 / LMG 7866 / NBRC 102419 / NCTC 12128 / CDC 0568-73).